A 210-amino-acid polypeptide reads, in one-letter code: HTH-type transcriptional regulator TtgR (210 aa).

The HTH tetR-type domain maps to 10 to 70 (QETRAQIIEA…ALLDSLHETH (61 aa)). Positions 33 to 52 (TLADIAELAGVTRGAIYWHF) form a DNA-binding region, H-T-H motif.

As to quaternary structure, homodimer.

Functionally, represses expression from the ttgABC operon promoter and its own expression. Binds to a promoter region between the divergently transcribed ttgR and ttgABC genes/operons; in the presence of chloramphenicol or tetracycline this binding no longer occurs and ttgR and ttgABC are derepressed. This suggests that TtgR binds these antibiotics. This is HTH-type transcriptional regulator TtgR (ttgR) from Pseudomonas putida (strain DOT-T1E).